The following is a 196-amino-acid chain: MPPKGWRKDAQGNYPTTSYIKEQENITIQDLLFPKSTIVNLAREVPQQSGKKLLINKDASLALQRGATVFVNHLLLFAREIAKSQDKKSCSVDDVLSALDHIGHSALKGPVRDKLDEYQAAVEQRKKEKLDSGEVDADGDIDMGEDKENVPVEKVKEHDEIEEQGDALQDVEESSEKKQKTESQDVETRVQNLEQT.

The segment at 125–196 is disordered; that stretch reads RKKEKLDSGE…ETRVQNLEQT (72 aa). Residues 133–143 show a composition bias toward acidic residues; that stretch reads GEVDADGDIDM. Basic and acidic residues predominate over residues 144–159; that stretch reads GEDKENVPVEKVKEHD. Residues 160-173 are compositionally biased toward acidic residues; sequence EIEEQGDALQDVEE. Residues 174-188 are compositionally biased toward basic and acidic residues; it reads SSEKKQKTESQDVET. A Phosphoserine; by ATM or ATR modification is found at Ser183.

DNA polymerase epsilon is a heterotetramer consisting of POL2, DPB2, DPB3 and DPB4. Component of the ISW2 complex, which at least consists of ISW2, ITC1, DLS1 and DPB4.

It localises to the nucleus. Functionally, as accessory component of the DNA polymerase epsilon (DNA polymerase II) participates in chromosomal DNA replication. It is required during synthesis of the leading and lagging DNA strands at the replication fork and binds at/or near replication origins and moves along DNA with the replication fork. It has 3'-5' proofreading exonuclease activity that correct errors arising during DNA replication. It is also involved in DNA synthesis during DNA repair. Also functions as a component of the ISW2 complex, which acts in remodeling the chromatin by catalyzing an ATP-dependent alteration in the structure of nucleosomal DNA. The ISW2 complex is involved in coordinating transcriptional repression and in inheritance of telomeric silencing. It is involved in repression of MAT a-specific genes, INO1, and early meiotic genes during mitotic growth dependent upon transcription factor UME6 and in a parallel pathway to the RPD3-SIN3 histone deacetylase complex. The sequence is that of DNA polymerase epsilon subunit D (DPB4) from Saccharomyces cerevisiae (strain ATCC 204508 / S288c) (Baker's yeast).